The following is a 435-amino-acid chain: tRNA-2-methylthio-N(6)-dimethylallyladenosine synthase (435 aa).

Residues 1–117 (MKYFIKTYGC…MPKLLEDVKV (117 aa)) enclose the MTTase N-terminal domain. Cysteine 10, cysteine 46, cysteine 80, cysteine 156, cysteine 160, and cysteine 163 together coordinate [4Fe-4S] cluster. The Radical SAM core domain occupies 142 to 370 (RDNSYCAYVT…LEIQKAITSK (229 aa)). One can recognise a TRAM domain in the interval 373 to 433 (QRYKNTVQKV…FQSLDGVVQN (61 aa)).

Belongs to the methylthiotransferase family. MiaB subfamily. In terms of assembly, monomer. Requires [4Fe-4S] cluster as cofactor.

The protein resides in the cytoplasm. The enzyme catalyses N(6)-dimethylallyladenosine(37) in tRNA + (sulfur carrier)-SH + AH2 + 2 S-adenosyl-L-methionine = 2-methylsulfanyl-N(6)-dimethylallyladenosine(37) in tRNA + (sulfur carrier)-H + 5'-deoxyadenosine + L-methionine + A + S-adenosyl-L-homocysteine + 2 H(+). In terms of biological role, catalyzes the methylthiolation of N6-(dimethylallyl)adenosine (i(6)A), leading to the formation of 2-methylthio-N6-(dimethylallyl)adenosine (ms(2)i(6)A) at position 37 in tRNAs that read codons beginning with uridine. The protein is tRNA-2-methylthio-N(6)-dimethylallyladenosine synthase of Hydrogenobaculum sp. (strain Y04AAS1).